The chain runs to 929 residues: Protein transport protein Sec16B (929 aa).

Residues 1–10 show a composition bias toward pro residues; sequence MEPWDPPQLP. Residues 1 to 64 are disordered; the sequence is MEPWDPPQLP…RPASQAESYE (64 aa). Residues 228–669 form a central conserved domain (CCD); required for localization to endoplasmic reticulum exit sites region; the sequence is APHKFLQPHV…LRTYCQHCQV (442 aa). Disordered stretches follow at residues 675–727 and 781–929; these read PEVA…QDVS and LSTR…PNPL. Residues 694 to 710 are compositionally biased toward basic and acidic residues; that stretch reads EMVHEQPHSDGPHDEQW. A compositionally biased stretch (low complexity) spans 781–795; sequence LSTRARSASESSTAS. Residues 838 to 848 are compositionally biased toward polar residues; sequence PKATTSGSPTP. Residues 856-871 show a composition bias toward pro residues; that stretch reads PSPPGAVPSAQPPASP.

The protein belongs to the SEC16 family. SEC16A and SEC16B are each present in multiple copies in a heteromeric complex.

It localises to the endoplasmic reticulum membrane. Its subcellular location is the golgi apparatus membrane. Functionally, plays a role in the organization of the endoplasmic reticulum exit sites (ERES), also known as transitional endoplasmic reticulum (tER). Required for secretory cargo traffic from the endoplasmic reticulum to the Golgi apparatus. Involved in peroxisome biogenesis. Regulates the transport of peroxisomal biogenesis factors PEX3 and PEX16 from the ER to peroxisomes. In Gallus gallus (Chicken), this protein is Protein transport protein Sec16B (SEC16B).